The sequence spans 976 residues: Ephrin type-A receptor 2 (976 aa).

The first 23 residues, 1–23 (MELQAARACFALLWGCALAAAAA), serve as a signal peptide directing secretion. A mediates interaction with CLDN4 region spans residues 1-206 (MELQAARACF…YYKKCPELLQ (206 aa)). The Extracellular segment spans residues 24–537 (AQGKEVVLLD…SPEGSGNLAV (514 aa)). Positions 28–206 (EVVLLDFAAA…YYKKCPELLQ (179 aa)) constitute an Eph LBD domain. Cystine bridges form between C70/C188 and C105/C115. A Fibronectin type-III 1 domain is found at 328 to 432 (PPSAPHYLTA…TSRSFRTASV (105 aa)). 2 N-linked (GlcNAc...) asparagine glycosylation sites follow: N407 and N435. In terms of domain architecture, Fibronectin type-III 2 spans 438–529 (EPPKVRLEGR…KVHEFQTLSP (92 aa)). The chain crosses the membrane as a helical span at residues 538–558 (IGGVAVGVVLLLVLAGVGFFI). Over 559 to 976 (HRRRKNQRAR…DQVNTVGIPI (418 aa)) the chain is Cytoplasmic. Phosphoserine is present on S570. Y575 carries the post-translational modification Phosphotyrosine. At S579 the chain carries Phosphoserine. Y588 is subject to Phosphotyrosine; by autocatalysis. Position 594 is a phosphotyrosine (Y594). Residues 606–906 (TEIHPSCVTR…STSGSEGVPF (301 aa)) form a mediates interaction with ARHGEF16 and ELMO2 region. One can recognise a Protein kinase domain in the interval 613 to 875 (VTRQKVIGAG…DIVSILDKLI (263 aa)). Position 619 to 627 (619 to 627 (IGAGEFGEV)) interacts with ATP. Residue Y628 is modified to Phosphotyrosine. K646 contacts ATP. Position 647 is a phosphothreonine (T647). Position 735 is a phosphotyrosine; by autocatalysis (Y735). Residue D739 is the Proton acceptor of the active site. Y772 carries the phosphotyrosine modification. Phosphoserine is present on residues S869 and S892. The tract at residues 886–976 (DFDPRVSIRL…DQVNTVGIPI (91 aa)) is negatively regulates interaction with ARHGEF16. S897 is subject to Phosphoserine; by PKB/AKT1, RPS6KA1, RPS6KA3 AND PKA. Position 901 is a phosphoserine (S901). Residues 904 to 968 (VPFRTVSEWL…AYSLLGLKDQ (65 aa)) form the SAM domain. At Y921 the chain carries Phosphotyrosine; by autocatalysis. Y930 carries the phosphotyrosine modification. The PDZ-binding signature appears at 974–976 (IPI).

It belongs to the protein kinase superfamily. Tyr protein kinase family. Ephrin receptor subfamily. Homodimer. Interacts with SLA. Interacts (phosphorylated form) with VAV2, VAV3 and PI3-kinase p85 subunit (PIK3R1, PIK3R2 or PIK3R3); critical for the EFNA1-induced activation of RAC1 which stimulates cell migration. Interacts with INPPL1; regulates activated EPHA2 endocytosis and degradation. Interacts (inactivated form) with PTK2/FAK1 and interacts (EFNA1 ligand-activated form) with PTPN11; regulates integrin-mediated adhesion. Interacts with ARHGEF16, DOCK4 and ELMO2; mediates ligand-independent activation of RAC1 which stimulates cell migration. Interacts with CLDN4; phosphorylates CLDN4 and may regulate tight junctions. Interacts with ACP1. Interacts (via SAM domain) with ANKS1A (via SAM domain). Interacts with CEMIP. Interacts with NCK1; may regulate EPHA2 activity in cell migration and adhesion. Interacts with TIMD4. As to quaternary structure, (Microbial infection) Interacts with human herpes virus 8/HHV-8 glycoprotein L/gL and glycoprotein H/gH heterodimer; this interaction triggers EPHA2 phosphorylation and endocytosis, allowing virus entry. In terms of assembly, (Microbial infection) Interacts with human cytomegalovirus (HCMV) glycoprotein L/gL and glycoprotein H/gH heterodimer. (Microbial infection) Interacts with Epstein-Barr virus/HHV-4 glycoprotein L/gL and glycoprotein H/gH heterodimer; this interaction facilitates virus internalization and fusion. Autophosphorylates. Phosphorylated on tyrosine upon binding and activation by EFNA1. Phosphorylated residues Tyr-588 and Tyr-594 are required for binding VAV2 and VAV3 while phosphorylated residues Tyr-735 and Tyr-930 are required for binding PI3-kinase p85 subunit (PIK3R1, PIK3R2 or PIK3R3). These phosphorylated residues are critical for recruitment of VAV2 and VAV3 and PI3-kinase p85 subunit which transduce downstream signaling to activate RAC1 GTPase and cell migration. Dephosphorylation of Tyr-930 by PTPRF prevents the interaction of EPHA2 with NCK1. Phosphorylated at Ser-897 by PKB; serum-induced phosphorylation which targets EPHA2 to the cell leading edge and stimulates cell migration. Phosphorylation by PKB is inhibited by EFNA1-activated EPHA2 which regulates PKB activity via a reciprocal regulatory loop. Phosphorylated at Ser-897 in response to TNF by RPS6KA1 and RPS6KA3; RPS6KA-EPHA2 signaling pathway controls cell migration. Phosphorylated at Ser-897 by PKA; blocks cell retraction induced by EPHA2 kinase activity. Dephosphorylated by ACP1. In terms of processing, ubiquitinated by CHIP/STUB1. Ubiquitination is regulated by the HSP90 chaperone and regulates the receptor stability and activity through proteasomal degradation. ANKS1A prevents ubiquitination and degradation. As to expression, expressed in brain and glioma tissue and glioma cell lines (at protein level). Expressed most highly in tissues that contain a high proportion of epithelial cells, e.g. skin, intestine, lung, and ovary.

It is found in the cell membrane. It localises to the cell projection. The protein localises to the ruffle membrane. The protein resides in the lamellipodium membrane. Its subcellular location is the cell junction. It is found in the focal adhesion. The enzyme catalyses L-tyrosyl-[protein] + ATP = O-phospho-L-tyrosyl-[protein] + ADP + H(+). Receptor tyrosine kinase which binds promiscuously membrane-bound ephrin-A family ligands residing on adjacent cells, leading to contact-dependent bidirectional signaling into neighboring cells. The signaling pathway downstream of the receptor is referred to as forward signaling while the signaling pathway downstream of the ephrin ligand is referred to as reverse signaling. Activated by the ligand ephrin-A1/EFNA1 regulates migration, integrin-mediated adhesion, proliferation and differentiation of cells. Regulates cell adhesion and differentiation through DSG1/desmoglein-1 and inhibition of the ERK1/ERK2 (MAPK3/MAPK1, respectively) signaling pathway. May also participate in UV radiation-induced apoptosis and have a ligand-independent stimulatory effect on chemotactic cell migration. During development, may function in distinctive aspects of pattern formation and subsequently in development of several fetal tissues. Involved for instance in angiogenesis, in early hindbrain development and epithelial proliferation and branching morphogenesis during mammary gland development. Engaged by the ligand ephrin-A5/EFNA5 may regulate lens fiber cells shape and interactions and be important for lens transparency development and maintenance. With ephrin-A2/EFNA2 may play a role in bone remodeling through regulation of osteoclastogenesis and osteoblastogenesis. Functionally, (Microbial infection) Acts as a receptor for hepatitis C virus (HCV) in hepatocytes and facilitates its cell entry. Mediates HCV entry by promoting the formation of the CD81-CLDN1 receptor complexes that are essential for HCV entry and by enhancing membrane fusion of cells expressing HCV envelope glycoproteins. Its function is as follows. Acts as a receptor for human cytomegalovirus (HCMV) to mediate viral entry and fusion in glioblastoma cells. The chain is Ephrin type-A receptor 2 (EPHA2) from Homo sapiens (Human).